The sequence spans 98 residues: UPF0251 protein VC0395_0048/VC395_A0084 (98 aa).

The protein belongs to the UPF0251 family.

The protein is UPF0251 protein VC0395_0048/VC395_A0084 of Vibrio cholerae serotype O1 (strain ATCC 39541 / Classical Ogawa 395 / O395).